A 243-amino-acid chain; its full sequence is Carboxy-S-adenosyl-L-methionine synthase (243 aa).

Residues Tyr-40, 65-67 (GCS), 90-91 (DN), 118-119 (DI), Asn-133, and Arg-200 contribute to the S-adenosyl-L-methionine site.

It belongs to the class I-like SAM-binding methyltransferase superfamily. Cx-SAM synthase family. In terms of assembly, homodimer.

It carries out the reaction prephenate + S-adenosyl-L-methionine = carboxy-S-adenosyl-L-methionine + 3-phenylpyruvate + H2O. Catalyzes the conversion of S-adenosyl-L-methionine (SAM) to carboxy-S-adenosyl-L-methionine (Cx-SAM). In Shewanella sp. (strain MR-7), this protein is Carboxy-S-adenosyl-L-methionine synthase.